The primary structure comprises 115 residues: Large ribosomal subunit protein bL20 (115 aa).

It belongs to the bacterial ribosomal protein bL20 family.

In terms of biological role, binds directly to 23S ribosomal RNA and is necessary for the in vitro assembly process of the 50S ribosomal subunit. It is not involved in the protein synthesizing functions of that subunit. In Prochlorococcus marinus (strain NATL2A), this protein is Large ribosomal subunit protein bL20.